We begin with the raw amino-acid sequence, 262 residues long: ATP synthase subunit a (262 aa).

The next 7 membrane-spanning stretches (helical) occupy residues 30-50 (ITSL…LTIF), 64-84 (WNIV…DQIG), 91-111 (LIYF…NILG), 123-143 (ISVT…IGFS), 149-169 (FFSL…LVLI), 195-215 (LFGV…SILL), and 220-240 (IGLP…VALL).

This sequence belongs to the ATPase A chain family. F-type ATPases have 2 components, CF(1) - the catalytic core - and CF(0) - the membrane proton channel. CF(1) has five subunits: alpha(3), beta(3), gamma(1), delta(1), epsilon(1). CF(0) has three main subunits: a, b and c.

The protein localises to the mitochondrion inner membrane. Mitochondrial membrane ATP synthase (F(1)F(0) ATP synthase or Complex V) produces ATP from ADP in the presence of a proton gradient across the membrane which is generated by electron transport complexes of the respiratory chain. F-type ATPases consist of two structural domains, F(1) - containing the extramembraneous catalytic core and F(0) - containing the membrane proton channel, linked together by a central stalk and a peripheral stalk. During catalysis, ATP synthesis in the catalytic domain of F(1) is coupled via a rotary mechanism of the central stalk subunits to proton translocation. Key component of the proton channel; it may play a direct role in the translocation of protons across the membrane. In Allomyces arbusculus (Aquatic fungus), this protein is ATP synthase subunit a (ATP6).